A 1070-amino-acid chain; its full sequence is Error-prone DNA polymerase (1070 aa).

It belongs to the DNA polymerase type-C family. DnaE2 subfamily.

The protein localises to the cytoplasm. It carries out the reaction DNA(n) + a 2'-deoxyribonucleoside 5'-triphosphate = DNA(n+1) + diphosphate. In terms of biological role, DNA polymerase involved in damage-induced mutagenesis and translesion synthesis (TLS). It is not the major replicative DNA polymerase. The chain is Error-prone DNA polymerase from Aromatoleum aromaticum (strain DSM 19018 / LMG 30748 / EbN1) (Azoarcus sp. (strain EbN1)).